The following is a 135-amino-acid chain: Putative pre-16S rRNA nuclease (135 aa).

This sequence belongs to the YqgF nuclease family.

It localises to the cytoplasm. In terms of biological role, could be a nuclease involved in processing of the 5'-end of pre-16S rRNA. The polypeptide is Putative pre-16S rRNA nuclease (Buchnera aphidicola subsp. Acyrthosiphon pisum (strain 5A)).